Here is a 371-residue protein sequence, read N- to C-terminus: Bifunctional enzyme IspD/IspF (371 aa).

The segment at 1–210 is 2-C-methyl-D-erythritol 4-phosphate cytidylyltransferase; that stretch reads MLDISLIMLS…LNLPKPSWDI (210 aa). The interval 211–371 is 2-C-methyl-D-erythritol 2,4-cyclodiphosphate synthase; it reads FNGNGFDVHE…NLKYFDWMKL (161 aa). Residues aspartate 217 and histidine 219 each contribute to the a divalent metal cation site. 4-CDP-2-C-methyl-D-erythritol 2-phosphate is bound by residues 217–219 and 243–244; these read DVH and HS. Residue histidine 251 participates in a divalent metal cation binding. Residues 265 to 267, 270 to 274, 341 to 344, phenylalanine 348, and arginine 351 contribute to the 4-CDP-2-C-methyl-D-erythritol 2-phosphate site; these read DIG, FPDND, and TTTE.

The protein in the N-terminal section; belongs to the IspD/TarI cytidylyltransferase family. IspD subfamily. This sequence in the C-terminal section; belongs to the IspF family. A divalent metal cation serves as cofactor.

It catalyses the reaction 2-C-methyl-D-erythritol 4-phosphate + CTP + H(+) = 4-CDP-2-C-methyl-D-erythritol + diphosphate. The enzyme catalyses 4-CDP-2-C-methyl-D-erythritol 2-phosphate = 2-C-methyl-D-erythritol 2,4-cyclic diphosphate + CMP. It functions in the pathway isoprenoid biosynthesis; isopentenyl diphosphate biosynthesis via DXP pathway; isopentenyl diphosphate from 1-deoxy-D-xylulose 5-phosphate: step 2/6. Its pathway is isoprenoid biosynthesis; isopentenyl diphosphate biosynthesis via DXP pathway; isopentenyl diphosphate from 1-deoxy-D-xylulose 5-phosphate: step 4/6. Functionally, bifunctional enzyme that catalyzes the formation of 4-diphosphocytidyl-2-C-methyl-D-erythritol from CTP and 2-C-methyl-D-erythritol 4-phosphate (MEP) (IspD), and catalyzes the conversion of 4-diphosphocytidyl-2-C-methyl-D-erythritol 2-phosphate (CDP-ME2P) to 2-C-methyl-D-erythritol 2,4-cyclodiphosphate (ME-CPP) with a corresponding release of cytidine 5-monophosphate (CMP) (IspF). This chain is Bifunctional enzyme IspD/IspF, found in Campylobacter lari (strain RM2100 / D67 / ATCC BAA-1060).